The chain runs to 186 residues: Large ribosomal subunit protein uL5 (186 aa).

Belongs to the universal ribosomal protein uL5 family. In terms of assembly, part of the 50S ribosomal subunit; part of the 5S rRNA/L5/L18/L25 subcomplex. Contacts the 5S rRNA and the P site tRNA. Forms a bridge to the 30S subunit in the 70S ribosome.

This is one of the proteins that bind and probably mediate the attachment of the 5S RNA into the large ribosomal subunit, where it forms part of the central protuberance. In the 70S ribosome it contacts protein S13 of the 30S subunit (bridge B1b), connecting the 2 subunits; this bridge is implicated in subunit movement. Contacts the P site tRNA; the 5S rRNA and some of its associated proteins might help stabilize positioning of ribosome-bound tRNAs. In Maricaulis maris (strain MCS10) (Caulobacter maris), this protein is Large ribosomal subunit protein uL5.